The sequence spans 539 residues: Putative serine/threonine-protein kinase L670 (539 aa).

The Cyclin N-terminal domain occupies Met-1–His-115. Residues Met-258 to Val-519 enclose the Protein kinase domain. ATP contacts are provided by residues Leu-264–Val-272 and Lys-285. The active-site Proton acceptor is the Asp-375.

Belongs to the protein kinase superfamily. Ser/Thr protein kinase family.

It carries out the reaction L-seryl-[protein] + ATP = O-phospho-L-seryl-[protein] + ADP + H(+). The enzyme catalyses L-threonyl-[protein] + ATP = O-phospho-L-threonyl-[protein] + ADP + H(+). This Acanthamoeba polyphaga mimivirus (APMV) protein is Putative serine/threonine-protein kinase L670.